Consider the following 315-residue polypeptide: Melanoma-associated antigen 9 (315 aa).

Over residues 1–13 (MSLEQRSPHCKPD) the composition is skewed to basic and acidic residues. Residues 1 to 67 (MSLEQRSPHC…PQSPQGGASS (67 aa)) form a disordered region. Residues 50–67 (SAAGSSSPPQSPQGGASS) are compositionally biased toward low complexity. Residues 108–307 (LKLKVAELVH…ICYPSLYEEV (200 aa)) enclose the MAGE domain.

Expressed in many tumors of several types, such as melanoma, head and neck squamous cell carcinoma, lung carcinoma and breast carcinoma, but not in normal tissues except for testes and placenta.

Its function is as follows. Not known, though may play a role in embryonal development and tumor transformation or aspects of tumor progression. This is Melanoma-associated antigen 9 (MAGEA9) from Homo sapiens (Human).